The sequence spans 40 residues: Photosystem II reaction center protein J (40 aa).

A helical transmembrane segment spans residues 8–28; sequence IPLWLIGTVTGIPVIGLVGIF.

Belongs to the PsbJ family. PSII is composed of 1 copy each of membrane proteins PsbA, PsbB, PsbC, PsbD, PsbE, PsbF, PsbH, PsbI, PsbJ, PsbK, PsbL, PsbM, PsbT, PsbX, PsbY, PsbZ, Psb30/Ycf12, at least 3 peripheral proteins of the oxygen-evolving complex and a large number of cofactors. It forms dimeric complexes.

It localises to the plastid. It is found in the chloroplast thylakoid membrane. One of the components of the core complex of photosystem II (PSII). PSII is a light-driven water:plastoquinone oxidoreductase that uses light energy to abstract electrons from H(2)O, generating O(2) and a proton gradient subsequently used for ATP formation. It consists of a core antenna complex that captures photons, and an electron transfer chain that converts photonic excitation into a charge separation. The sequence is that of Photosystem II reaction center protein J from Cucumis sativus (Cucumber).